A 157-amino-acid polypeptide reads, in one-letter code: Protein Smg homolog (157 aa).

It belongs to the Smg family.

The sequence is that of Protein Smg homolog from Shewanella pealeana (strain ATCC 700345 / ANG-SQ1).